The sequence spans 89 residues: Small ribosomal subunit protein bS20 (89 aa).

The segment at 1 to 22 (MANTASARKRIRQNERRRERNV) is disordered. Residues 12-22 (RQNERRRERNV) are compositionally biased toward basic and acidic residues.

Belongs to the bacterial ribosomal protein bS20 family.

Binds directly to 16S ribosomal RNA. The polypeptide is Small ribosomal subunit protein bS20 (Gluconobacter oxydans (strain 621H) (Gluconobacter suboxydans)).